The following is a 299-amino-acid chain: Anti-sigma-D factor RsdA (299 aa).

A helical transmembrane segment spans residues 86-106; that stretch reads LAAVGSVAAALLVLSGFGAVV. The segment at 187–299 is disordered; it reads NTKVETRDPN…APETPVSPTH (113 aa). Composition is skewed to low complexity over residues 201–212 and 250–271; these read PGSPSNPAAPGS and PNSTSTVAASPSTPSSKPEPGS.

In terms of assembly, interacts with ECF RNA polymerase sigma factor SigD; this should inhibit the interaction of SigD with the RNA polymerase catalytic core. The cytosolic fragment is degraded by a ClpP1-ClpP2-ClpX complex, as would be expected after S1P and S2P intramembrane proteolysis. This releases SigD so that it may bind to the RNA polymerase catalytic core.

Its subcellular location is the cell membrane. Its function is as follows. An anti-sigma factor for extracytoplasmic function (ECF) sigma factor SigD. ECF sigma factors are held in an inactive form by an anti-sigma factor until released by regulated intramembrane proteolysis (RIP). RIP occurs when an extracytoplasmic signal triggers a concerted proteolytic cascade to transmit information and elicit cellular responses. The membrane-spanning regulatory substrate protein is first cut extracytoplasmically (site-1 protease, S1P), then within the membrane itself (site-2 protease, S2P), while cytoplasmic proteases finish degrading the regulatory protein, liberating the sigma factor. Neither S1P nor S2P proteases have been so far identified for this anti-sigma factor. The protein is Anti-sigma-D factor RsdA (rsda) of Mycobacterium bovis (strain ATCC BAA-935 / AF2122/97).